A 343-amino-acid chain; its full sequence is GTPase Obg (343 aa).

The region spanning 1–158 (MFIDEAKIRV…FTLRLELKVL (158 aa)) is the Obg domain. The tract at residues 121 to 140 (RGGRGNQHFATSTHQAPREH) is disordered. One can recognise an OBG-type G domain in the interval 159 to 333 (ADIGIVGYPN…LKYAMAERVR (175 aa)). Residues 165–172 (GYPNVGKS), 190–194 (FTTLE), 215–218 (DIPG), 286–289 (SKID), and 314–316 (SAV) contribute to the GTP site. Residues serine 172 and threonine 192 each contribute to the Mg(2+) site.

This sequence belongs to the TRAFAC class OBG-HflX-like GTPase superfamily. OBG GTPase family. As to quaternary structure, monomer. The cofactor is Mg(2+).

The protein localises to the cytoplasm. Functionally, an essential GTPase which binds GTP, GDP and possibly (p)ppGpp with moderate affinity, with high nucleotide exchange rates and a fairly low GTP hydrolysis rate. Plays a role in control of the cell cycle, stress response, ribosome biogenesis and in those bacteria that undergo differentiation, in morphogenesis control. In Acidobacterium capsulatum (strain ATCC 51196 / DSM 11244 / BCRC 80197 / JCM 7670 / NBRC 15755 / NCIMB 13165 / 161), this protein is GTPase Obg.